The primary structure comprises 89 residues: Small ribosomal subunit protein uS15 (89 aa).

Basic and acidic residues predominate over residues 1 to 11; it reads MSIAAERKAEV. The interval 1–24 is disordered; that stretch reads MSIAAERKAEVIKTNATKAGDTGS.

This sequence belongs to the universal ribosomal protein uS15 family. Part of the 30S ribosomal subunit. Forms a bridge to the 50S subunit in the 70S ribosome, contacting the 23S rRNA.

Functionally, one of the primary rRNA binding proteins, it binds directly to 16S rRNA where it helps nucleate assembly of the platform of the 30S subunit by binding and bridging several RNA helices of the 16S rRNA. In terms of biological role, forms an intersubunit bridge (bridge B4) with the 23S rRNA of the 50S subunit in the ribosome. The chain is Small ribosomal subunit protein uS15 from Bradyrhizobium diazoefficiens (strain JCM 10833 / BCRC 13528 / IAM 13628 / NBRC 14792 / USDA 110).